We begin with the raw amino-acid sequence, 248 residues long: Triosephosphate isomerase (248 aa).

9–11 provides a ligand contact to substrate; it reads NWK. H92 serves as the catalytic Electrophile. E164 (proton acceptor) is an active-site residue. Residues G170, S209, and 230–231 contribute to the substrate site; that span reads GG.

Belongs to the triosephosphate isomerase family. As to quaternary structure, homodimer.

It is found in the cytoplasm. The enzyme catalyses D-glyceraldehyde 3-phosphate = dihydroxyacetone phosphate. It functions in the pathway carbohydrate biosynthesis; gluconeogenesis. It participates in carbohydrate degradation; glycolysis; D-glyceraldehyde 3-phosphate from glycerone phosphate: step 1/1. In terms of biological role, involved in the gluconeogenesis. Catalyzes stereospecifically the conversion of dihydroxyacetone phosphate (DHAP) to D-glyceraldehyde-3-phosphate (G3P). This is Triosephosphate isomerase from Thiobacillus denitrificans (strain ATCC 25259 / T1).